We begin with the raw amino-acid sequence, 225 residues long: Small ribosomal subunit protein uS2 (225 aa).

The segment covering 1 to 14 has biased composition (basic and acidic residues); sequence MAEAKPAPEKEAAA. Positions 1–33 are disordered; that stretch reads MAEAKPAPEKEAAAKTESVPVETEGEGPSVKEG.

It belongs to the universal ribosomal protein uS2 family.

This Methanosarcina barkeri (strain Fusaro / DSM 804) protein is Small ribosomal subunit protein uS2.